A 77-amino-acid chain; its full sequence is Delta-conotoxin GmVIA (77 aa).

Residues M1–A22 form the signal peptide. Positions D23 to R48 are excised as a propeptide. Disulfide bonds link C52–C67, C59–C72, and C66–C76.

The protein belongs to the conotoxin O1 superfamily. Expressed by the venom duct.

The protein localises to the secreted. Functionally, delta-conotoxins bind to site 6 of voltage-gated sodium channels (Nav) and inhibit the inactivation process. This toxin shows weak activity on rNav1.2/SCN2A (EC(50)=2.5 uM) and rNav1.4/SCN4A (EC(50)=4.8 uM). In vivo, injection of this peptide in the head region of garden snail induces retraction of the head and body into shell. This is followed by secretion of viscous green slime and a convulsive undulation into and out of the shell. No apparent biological activity was observed when a much greater dose of peptide was injected intraperitoneally into mice. The sequence is that of Delta-conotoxin GmVIA from Conus gloriamaris (Glory-of-the-Sea cone).